The sequence spans 532 residues: MEDKRIVLAIILSLVVFLGWHSFAEYMGWISPKVQHVANERHSSVDQTATSNIALDSVQSVFSPPTGKDVYIETPLYIAKIHSSGGILSSFILKKYKVNLDNTSPLVNLVSPEASQAMPLGITLNGQPSWSNGNWSFLGGDLYLKPGETKELTFVGIVNGVKIIRIFTFNADSYLIHEKLQLASEKQNSCPTKVGLLVAATPFGTGQYDPTRMAWSIKDSFKEETSIDTLKEKGIQESGEFNWGGVMSNYFMNVVALSDPLYLTIKGRIQNDVWRVALERSNVLIPAEGTTSITVNWWFGPKDRELLSRAPDKLENAIDFGMFSIIAKPLLTALTFFYEYTGNWGVAIIVLTLCIKIVFWPLSQKSYNSMEQMKKLQPMMQKLREKYANDRDTLNREIMQLYKTYKVNPAGGCLPILLQIPVFIGLYQALLNSIELRHATFIYYLPFTHLVWLADLSAADPFYITPLLMGASMFLQQKLTPASGDPTQQKIMMVMPIIFTVMFLNFPAGLVIYWLFNNLLSIGQQWWMLRKA.

A run of 6 helical transmembrane segments spans residues 6–26 (IVLA…FAEY), 317–337 (AIDF…LTFF), 342–362 (GNWG…FWPL), 411–431 (GGCL…QALL), 451–473 (VWLA…GASM), and 496–516 (PIIF…YWLF).

This sequence belongs to the OXA1/ALB3/YidC family. Type 1 subfamily. As to quaternary structure, interacts with the Sec translocase complex via SecD. Specifically interacts with transmembrane segments of nascent integral membrane proteins during membrane integration.

Its subcellular location is the cell membrane. Required for the insertion and/or proper folding and/or complex formation of integral membrane proteins into the membrane. Involved in integration of membrane proteins that insert both dependently and independently of the Sec translocase complex, as well as at least some lipoproteins. Aids folding of multispanning membrane proteins. This chain is Membrane protein insertase YidC, found in Lawsonia intracellularis (strain PHE/MN1-00).